The primary structure comprises 752 residues: THO complex subunit HPR1 (752 aa).

A Phosphoserine modification is found at Ser-234. Positions 648–752 (RKKRALEEEA…SNGSSTQDMK (105 aa)) are disordered. Residues 692 to 702 (EISEENTKIKS) show a composition bias toward basic and acidic residues. Polar residues predominate over residues 720–752 (PQNTTAQLENPKTEDNNAATSNISNGSSTQDMK).

As to quaternary structure, component of the THO complex, which is composed of HPR1, MFT1, THO2 and THP2. Together with SUB2, TEX1 and YRA1, THO forms the transcription/export (TREX) complex. THO associates with DNA and RNA in vitro.

The protein localises to the nucleus. In terms of biological role, component the THO subcomplex of the TREX complex, which operates in coupling transcription elongation to mRNA export. The THO complex is recruited to transcribed genes and moves along the gene with the elongating polymerase during transcription. THO is important for stabilizing nascent RNA in the RNA polymerase II elongation complex by preventing formation of DNA:RNA hybrids behind the elongating polymerase. It functions in cotranscriptional formation of an export-competent messenger ribonucleoprotein particle (mRNP) by facilitating the loading of ATP-dependent RNA helicase SUB2 and the mRNA export factor YRA1 along the nascent mRNA. The protein is THO complex subunit HPR1 (HPR1) of Saccharomyces cerevisiae (strain ATCC 204508 / S288c) (Baker's yeast).